A 424-amino-acid polypeptide reads, in one-letter code: Zygote arrest protein 1 (424 aa).

Disordered stretches follow at residues 125–175 (RTLQ…PMRF) and 196–313 (GPGP…SPEL). Gly residues predominate over residues 141–150 (GAEGTTGGGS). The span at 289-298 (RARDGGDGRE) shows a compositional bias: basic and acidic residues. The segment at 326–409 (KYGYYHCKDC…RQDLCGRCKG (84 aa)) adopts a 3CxxC-type zinc-finger fold.

The protein belongs to the ZAR1 family. Interacts with YBX2. Ubiquitinated and degradaded by the proteasome during oocyte meiotic maturation, leading to MARDO (mitochondria-associated ribonucleoprotein domain) membraneless compartment dissolution. Ovary and testis.

The protein localises to the cytoplasm. The protein resides in the cytoplasmic ribonucleoprotein granule. Functionally, mRNA-binding protein that mediates formation of MARDO (mitochondria-associated ribonucleoprotein domain), a membraneless compartment that stores maternal mRNAs in oocytes. MARDO assembly around mitochondria is directed by an increase in mitochondrial membrane potential during oocyte growth. Promotes formation of MARDO phase-separated membraneless compartment by undergoing liquid-liquid phase separation upon binding to maternal mRNAs. Binds to the 3'-UTR of maternal mRNAs. Maternal mRNAs stored in the MARDO are translationally repressed. Essential for female fertility and oocyte-to-embryo transition by coordinating maternal mRNA storage, translation and degradation. This chain is Zygote arrest protein 1, found in Homo sapiens (Human).